The following is a 471-amino-acid chain: 7-dehydrocholesterol reductase (471 aa).

Residues 1-23 form a disordered region; that stretch reads MASKSQHNAPKVKSPNGKAGSQG. Ser-14 carries the post-translational modification Phosphoserine. Transmembrane regions (helical) follow at residues 36-56, 95-115, 144-164, 173-193, 233-253, 262-282, 302-322, and 327-347; these read LASIIFLLLFAPFIVYYFIMA, LYALWVSFQVLLYSWLPDFCH, LQAWLITHILWFVNAYLLSWF, WIPLLWCANILGYAVSTFAMI, LFFNGRPGIVAWTLINLSFAA, VTNSMILVNVLQAIYVLDFFW, LGWGDCVWLPYLYTLQGLYLV, and QLSTPNALGILLLGLVGYYIF. Residues Lys-354, Arg-358, Leu-391, Trp-396, and 403 to 404 each bind NADP(+); that span reads NY. Residues 416–436 form a helical membrane-spanning segment; it reads LACGGGHLLPYFYIIYMTILL. NADP(+) is bound by residues Asp-443, 447–451, and Tyr-458; that span reads CANKY.

It belongs to the ERG4/ERG24 family. As to quaternary structure, interacts with DHCR24; this interaction regulates DHCR7 activity. Interacts with TMEM147.

The protein resides in the endoplasmic reticulum membrane. The enzyme catalyses cholesterol + NADP(+) = 7-dehydrocholesterol + NADPH + H(+). It carries out the reaction 7-dehydrodesmosterol + NADPH + H(+) = desmosterol + NADP(+). The catalysed reaction is 5,6alpha-epoxy-5alpha-cholestan-3beta-ol + H2O = 5alpha-cholestane-3beta,5,6beta-triol. It catalyses the reaction 5,6beta-epoxy-5beta-cholestan-3beta-ol + H2O = 5alpha-cholestane-3beta,5,6beta-triol. The protein operates within steroid biosynthesis; cholesterol biosynthesis. Functionally, oxidoreductase that catalyzes the last step of the cholesterol synthesis pathway, which transforms cholesta-5,7-dien-3beta-ol (7-dehydrocholesterol,7-DHC) into cholesterol by reducing the C7-C8 double bond of its sterol core. Can also metabolize cholesta-5,7,24-trien-3beta-ol (7-dehydrodemosterol, 7-DHD) to desmosterol, which is then metabolized by the Delta(24)-sterol reductase (DHCR24) to cholesterol. Modulates ferroptosis (a form of regulated cell death driven by iron-dependent lipid peroxidation) through the metabolic breakdown of the anti-ferroptotic metabolites 7-DHC and 7-DHD which, when accumulated, divert the propagation of peroxyl radical-mediated damage from phospholipid components to its sterol core, protecting plasma and mitochondrial membranes from phospholipid autoxidation. Its function is as follows. Component of the microsomal antiestrogen binding site (AEBS), a multiproteic complex at the ER membrane that consists of an association between cholestenol Delta-isomerase/EBP and DHCR7. This complex is responsible for cholesterol-5,6-epoxide hydrolase (ChEH) activity, which consists in the hydration of cholesterol-5,6-epoxides (5,6-EC) into cholestane-3beta,5alpha,6beta-triol (CT). The precise role of each component of this complex has not been described yet. This Mus musculus (Mouse) protein is 7-dehydrocholesterol reductase (Dhcr7).